The primary structure comprises 313 residues: Protein FixB (313 aa).

255 to 283 (LYLAVGISGQIQHMVGANASQTIFAINKD) contacts FAD.

The protein belongs to the ETF alpha-subunit/FixB family. Heterodimer of FixA and FixB.

It functions in the pathway amine and polyamine metabolism; carnitine metabolism. In terms of biological role, required for anaerobic carnitine reduction. May bring reductant to CaiA. The sequence is that of Protein FixB from Escherichia coli O8 (strain IAI1).